Here is a 385-residue protein sequence, read N- to C-terminus: Proliferation-associated protein A (385 aa).

This sequence belongs to the peptidase M24 family.

The polypeptide is Proliferation-associated protein A (prlA) (Dictyostelium discoideum (Social amoeba)).